The sequence spans 1777 residues: MQEESANDMECEQLPAEILRQVTVHRDPIYGFGFVAGSERPVVVRSVRPGGPSENKLLAGDQIVAINEEDVSEAPRERLIELIRSAKEFIVLTVLHTHQSPKSAFISAAKKAKLRSNPVKVRFSEQVAVGETDAKMMKKEALLLIPNVLKVFLENGQIKSFTFDGRTTVKDVMLTLQDRLSLRFIEHFALVLEYAGPEQNHKFLLLQDKQPLAYVVQRTHYHGMKCLFRISFFPKDPVELLRRDPAAFEYLYIQSRNDVIRERFGMDPKPEMLLGLAALHIYITVSATRPSQKISLKNVEKEWGLEPFLPPSLLQVIKEKNLRKSLSQQLKAHQTHPSCGTKGSAIQAKLQYLRILNELPTFTGVLFNTVGLDEKQSATTLLVGPRHGISHVIDLKTNLTTVLSEFSKISKIQLFRENQGVARVETSIMDAKPLVLLMEWPEATNFACLIAGYCRLLLDSRKMVFSRPASQPLPPPMIKADYMHSAHRPVTGGHLGKKESSYVGSVGTSPRKSSRCTPPPADSELVSFCYLHMREQRKEQESRTDVNENLIFFEETRPRTKSDPTSKSSGQGYEVVPDDFDAASLDHEPCASRARSYTLDNSLGAEALNFYCDSCKAKLQEQLGPRKGGKPGSSRDNIVDLMSLPPPGSEEEEEEEDETTSLLPAIAAPPPGFRDNSSDEDDPKRRAVQSQEQGRHLRGLLYDEIPVTLIDSVQTRTVRDHAQELDDALVSTLQALEALAASEDGPHPPPPQTAGLIVLATITPESSLDSGHETNSSELTDMSEMMSAMKQHQNTTYFLAQHLNKDSLLARKDLPFRIQSCAAQAVLTAPYSLGRPDPNPSLQPIATGQSPGPPGARRKLPQSEGQVQGERTYSLAVHPALSPQLSEQKNLSLLSPVPEDKGPGHTRAGLEMSLRAATSSLSEEQVSELRDNLPKEVRLSPKLILDPKSSVTPAIISAALQQVVHNKSLVTAGGALGNPPSRGERRLEASMGRPEVSMMSSSASKNLKFKISPSAPETSWNSQHQLGAEVSSSPRAPTGSRADSLHLSQQEDSLPVQNFPPKSYLLRTSRESVGKQATGEVAGKGGPVGGKPTLQKQGTISSQGEKAQLESTPKRSKLEETSLVPRATYPMALQSPSCQSRSHSPSCQPHGHSPSSQSRGQSPSCQPRGQSPLRSQAASRQVSTMPSRKLETTLNGAHSTSEGPAKPKSSRGPFRLRNLFSATFPTRQKKETDERQAQLQKVKQYELEFLEELLKPPSQGELPGTEYLQPPAPGRCSCQLRSSPVQQGPGMSREQRRSCDCKRICRGGRPQATQTPVPSLRGRERDRVLPSQRQPEAGPGVSLSSPINVQRIRSTSLESRECRSDPESGVSCLTTCASGGECLGAPNYRKLMRRYSISELDQGDRASLTSDVYPHPPLGMLPREAKEVEASLPIALGPKSRSLESPTLGDPSYVQVAPETKGPRQMAVFSLPEEVYRKPAELDEDSESSKCCSIRYCFYYRKCDMADDASDGKDELSYSIPMKILPGMKLDEQVVPVVSRTLQVLDAATCSSSSPEASRTQEIDLRVSTFEGSLAKINALRAHAYGLPDGFLAARLDTNELLTVLRQCVASPEARAPKPYVSQISEYKLELALKFKELRASCRRVANVDKSPTHMLAAITGSFQVLSSLIETFVRLVFIVRSEAQRQELLAKVEEVVRNYTFLLRAAEESTARNLNQQQQQQQQQQQQQQQQQQQQQQQQQQQVAAAAGAATEHPPGSPTSATVMSTFTHSLKTLIK.

Positions 21–98 (QVTVHRDPIY…FIVLTVLHTH (78 aa)) constitute a PDZ domain. The FERM domain occupies 147-461 (NVLKVFLENG…GYCRLLLDSR (315 aa)). Disordered regions lie at residues 491-520 (TGGH…TPPP), 555-574 (ETRP…QGYE), 622-697 (QLGP…GRHL), 832-871 (SLGR…QGER), 1014-1216 (SAPE…PFRL), 1309-1346 (RPQA…LSSP), and 1732-1765 (QQQQ…ATVM). The segment covering 502-511 (YVGSVGTSPR) has biased composition (polar residues). Residues 555–564 (ETRPRTKSDP) show a composition bias toward basic and acidic residues. Over residues 649–659 (SEEEEEEEDET) the composition is skewed to acidic residues. Composition is skewed to polar residues over residues 840–850 (PSLQPIATGQS), 1015–1035 (APET…SSPR), 1046–1056 (HLSQQEDSLPV), and 1094–1111 (LQKQ…QLES). The segment covering 1134-1168 (QSPSCQSRSHSPSCQPHGHSPSSQSRGQSPSCQPR) has biased composition (low complexity). Residues 1172 to 1202 (PLRSQAASRQVSTMPSRKLETTLNGAHSTSE) are compositionally biased toward polar residues. A compositionally biased stretch (low complexity) spans 1732 to 1751 (QQQQQQQQQQQQVAAAAGAA).

This chain is FERM and PDZ domain-containing protein 3, found in Homo sapiens (Human).